Reading from the N-terminus, the 247-residue chain is ATP synthase subunit a, plastid (247 aa).

A run of 5 helical transmembrane segments spans residues 33 to 53 (FLVH…LLGS), 95 to 115 (VPFI…GALL), 134 to 154 (INTT…AGIL), 199 to 219 (LVVV…VMLL), and 220 to 240 (GLFT…AYIG).

Belongs to the ATPase A chain family. F-type ATPases have 2 components, CF(1) - the catalytic core - and CF(0) - the membrane proton channel. CF(1) has five subunits: alpha(3), beta(3), gamma(1), delta(1), epsilon(1). CF(0) has four main subunits: a, b, b' and c.

Its subcellular location is the plastid membrane. In terms of biological role, key component of the proton channel; it plays a direct role in the translocation of protons across the membrane. The chain is ATP synthase subunit a, plastid from Cuscuta exaltata (Tall dodder).